A 109-amino-acid polypeptide reads, in one-letter code: Non-structural protein NS-S (109 aa).

It belongs to the orthobunyavirus NS-S protein family.

Its function is as follows. Inhibits host transcriptional machinery, by producing modifications to the phosphorylation state of the C-terminal domain (CTD) of RNA polymerase II. Inhibits phosphorylation at serine 2 in the heptapeptide repeat (YSPTSPS) of the CTD of RNA polymerase II, suggesting that the elongation step of transcription and/or 3'-end processing is prevented. Inhibition of host transcription machinery leads to shut off of host cell protein synthesis and inhibition of the host innate immune response. NSs also seems to be involved in the nuclear relocalization of host PABP1. This Culex protein is Non-structural protein NS-S (N).